A 502-amino-acid chain; its full sequence is Probable cytosol aminopeptidase (502 aa).

Mn(2+)-binding residues include Lys-265 and Asp-270. Lys-277 is an active-site residue. Mn(2+) contacts are provided by Asp-288, Asp-347, and Glu-349. Arg-351 is a catalytic residue.

The protein belongs to the peptidase M17 family. Mn(2+) is required as a cofactor.

It localises to the cytoplasm. It catalyses the reaction Release of an N-terminal amino acid, Xaa-|-Yaa-, in which Xaa is preferably Leu, but may be other amino acids including Pro although not Arg or Lys, and Yaa may be Pro. Amino acid amides and methyl esters are also readily hydrolyzed, but rates on arylamides are exceedingly low.. The catalysed reaction is Release of an N-terminal amino acid, preferentially leucine, but not glutamic or aspartic acids.. In terms of biological role, presumably involved in the processing and regular turnover of intracellular proteins. Catalyzes the removal of unsubstituted N-terminal amino acids from various peptides. The chain is Probable cytosol aminopeptidase from Rickettsia bellii (strain OSU 85-389).